Reading from the N-terminus, the 477-residue chain is Cysteine--tRNA ligase (477 aa).

Residue cysteine 34 participates in Zn(2+) binding. The short motif at 36 to 46 (PTVYDFAHIGN) is the 'HIGH' region element. Zn(2+)-binding residues include cysteine 235, histidine 260, and glutamate 264. A 'KMSKS' region motif is present at residues 293-297 (KMSKS). Lysine 296 is an ATP binding site.

Belongs to the class-I aminoacyl-tRNA synthetase family. As to quaternary structure, monomer. The cofactor is Zn(2+).

It localises to the cytoplasm. It carries out the reaction tRNA(Cys) + L-cysteine + ATP = L-cysteinyl-tRNA(Cys) + AMP + diphosphate. The polypeptide is Cysteine--tRNA ligase (Mesorhizobium japonicum (strain LMG 29417 / CECT 9101 / MAFF 303099) (Mesorhizobium loti (strain MAFF 303099))).